The sequence spans 304 residues: tRNA pseudouridine synthase B (304 aa).

The Nucleophile role is filled by Asp-47. The disordered stretch occupies residues 85–105 (TNTDDGEGEVTETSDARPSDD).

It belongs to the pseudouridine synthase TruB family. Type 1 subfamily.

The enzyme catalyses uridine(55) in tRNA = pseudouridine(55) in tRNA. Responsible for synthesis of pseudouridine from uracil-55 in the psi GC loop of transfer RNAs. This Dinoroseobacter shibae (strain DSM 16493 / NCIMB 14021 / DFL 12) protein is tRNA pseudouridine synthase B.